We begin with the raw amino-acid sequence, 232 residues long: Biosynthetic peptidoglycan transglycosylase (232 aa).

A helical membrane pass occupies residues 12 to 31; it reads YLLWFMAASVVLVAVLRWVP.

It belongs to the glycosyltransferase 51 family.

Its subcellular location is the cell inner membrane. It catalyses the reaction [GlcNAc-(1-&gt;4)-Mur2Ac(oyl-L-Ala-gamma-D-Glu-L-Lys-D-Ala-D-Ala)](n)-di-trans,octa-cis-undecaprenyl diphosphate + beta-D-GlcNAc-(1-&gt;4)-Mur2Ac(oyl-L-Ala-gamma-D-Glu-L-Lys-D-Ala-D-Ala)-di-trans,octa-cis-undecaprenyl diphosphate = [GlcNAc-(1-&gt;4)-Mur2Ac(oyl-L-Ala-gamma-D-Glu-L-Lys-D-Ala-D-Ala)](n+1)-di-trans,octa-cis-undecaprenyl diphosphate + di-trans,octa-cis-undecaprenyl diphosphate + H(+). It functions in the pathway cell wall biogenesis; peptidoglycan biosynthesis. Functionally, peptidoglycan polymerase that catalyzes glycan chain elongation from lipid-linked precursors. The protein is Biosynthetic peptidoglycan transglycosylase of Pseudomonas aeruginosa (strain ATCC 15692 / DSM 22644 / CIP 104116 / JCM 14847 / LMG 12228 / 1C / PRS 101 / PAO1).